Consider the following 359-residue polypeptide: AA9 family lytic polysaccharide monooxygenase B (359 aa).

The N-terminal stretch at 1-18 (MQLFTSFSLLAVASFASA) is a signal peptide. 2 residues coordinate Cu(2+): His19 and His102. Cystine bridges form between Cys72/Cys190 and Cys113/Cys117. Asn150 is a glycosylation site (N-linked (GlcNAc...) asparagine). O2 contacts are provided by His176 and Gln185. Tyr187 provides a ligand contact to Cu(2+). Residues 241 to 310 (GGSPGNSAEP…STNINPTSLK (70 aa)) form a disordered region. Over residues 245–254 (GNSAEPQPQH) the composition is skewed to polar residues. Over residues 255–304 (TSTAVSTAKTASTSSLTTSVTITSQAPSNTANPPQSITTTTTPKPQSTNI) the composition is skewed to low complexity. The N-linked (GlcNAc...) asparagine glycan is linked to Asn345.

This sequence belongs to the polysaccharide monooxygenase AA9 family. Cu(2+) serves as cofactor.

The protein localises to the secreted. The enzyme catalyses [(1-&gt;4)-beta-D-glucosyl]n+m + reduced acceptor + O2 = 4-dehydro-beta-D-glucosyl-[(1-&gt;4)-beta-D-glucosyl]n-1 + [(1-&gt;4)-beta-D-glucosyl]m + acceptor + H2O.. Functionally, lytic polysaccharide monooxygenase (LPMO) that depolymerizes crystalline and amorphous polysaccharides via the oxidation of scissile alpha- or beta-(1-4)-glycosidic bonds, yielding C1 and C4 oxidation products. Catalysis by LPMOs requires the reduction of the active-site copper from Cu(II) to Cu(I) by a reducing agent and H(2)O(2) or O(2) as a cosubstrate. Active on cellulose and on xyloglucan for deconstruction of plant biomass. The polypeptide is AA9 family lytic polysaccharide monooxygenase B (Geotrichum candidum (Oospora lactis)).